We begin with the raw amino-acid sequence, 303 residues long: Probable 5-dehydro-4-deoxyglucarate dehydratase (303 aa).

The protein belongs to the DapA family.

It catalyses the reaction 5-dehydro-4-deoxy-D-glucarate + H(+) = 2,5-dioxopentanoate + CO2 + H2O. The protein operates within carbohydrate acid metabolism; D-glucarate degradation; 2,5-dioxopentanoate from D-glucarate: step 2/2. The protein is Probable 5-dehydro-4-deoxyglucarate dehydratase of Delftia acidovorans (strain DSM 14801 / SPH-1).